The sequence spans 204 residues: GTP cyclohydrolase-2 (204 aa).

Residue 49-53 (RIHSE) coordinates GTP. 3 residues coordinate Zn(2+): Cys-54, Cys-65, and Cys-67. GTP-binding positions include Gln-70, 92–94 (EGR), and Thr-114. The Proton acceptor role is filled by Asp-126. Residue Arg-128 is the Nucleophile of the active site. GTP-binding residues include Thr-149 and Lys-154.

The protein belongs to the GTP cyclohydrolase II family. Zn(2+) serves as cofactor.

The enzyme catalyses GTP + 4 H2O = 2,5-diamino-6-hydroxy-4-(5-phosphoribosylamino)-pyrimidine + formate + 2 phosphate + 3 H(+). It functions in the pathway cofactor biosynthesis; riboflavin biosynthesis; 5-amino-6-(D-ribitylamino)uracil from GTP: step 1/4. In terms of biological role, catalyzes the conversion of GTP to 2,5-diamino-6-ribosylamino-4(3H)-pyrimidinone 5'-phosphate (DARP), formate and pyrophosphate. This chain is GTP cyclohydrolase-2, found in Shewanella baltica (strain OS155 / ATCC BAA-1091).